Here is a 702-residue protein sequence, read N- to C-terminus: Ribosomal RNA large subunit methyltransferase K/L (702 aa).

One can recognise a THUMP domain in the interval 43–154 (LIYQSLMWSR…KETASIALDL (112 aa)).

This sequence belongs to the methyltransferase superfamily. RlmKL family.

Its subcellular location is the cytoplasm. The catalysed reaction is guanosine(2445) in 23S rRNA + S-adenosyl-L-methionine = N(2)-methylguanosine(2445) in 23S rRNA + S-adenosyl-L-homocysteine + H(+). It catalyses the reaction guanosine(2069) in 23S rRNA + S-adenosyl-L-methionine = N(2)-methylguanosine(2069) in 23S rRNA + S-adenosyl-L-homocysteine + H(+). Its function is as follows. Specifically methylates the guanine in position 2445 (m2G2445) and the guanine in position 2069 (m7G2069) of 23S rRNA. This is Ribosomal RNA large subunit methyltransferase K/L from Salmonella paratyphi B (strain ATCC BAA-1250 / SPB7).